A 365-amino-acid chain; its full sequence is Aminomethyltransferase (365 aa).

This sequence belongs to the GcvT family. The glycine cleavage system is composed of four proteins: P, T, L and H.

The enzyme catalyses N(6)-[(R)-S(8)-aminomethyldihydrolipoyl]-L-lysyl-[protein] + (6S)-5,6,7,8-tetrahydrofolate = N(6)-[(R)-dihydrolipoyl]-L-lysyl-[protein] + (6R)-5,10-methylene-5,6,7,8-tetrahydrofolate + NH4(+). In terms of biological role, the glycine cleavage system catalyzes the degradation of glycine. The chain is Aminomethyltransferase from Chlorobium luteolum (strain DSM 273 / BCRC 81028 / 2530) (Pelodictyon luteolum).